A 480-amino-acid polypeptide reads, in one-letter code: ATP synthase subunit beta, chloroplastic (480 aa).

Position 161–168 (161–168) interacts with ATP; sequence GGAGVGKT.

This sequence belongs to the ATPase alpha/beta chains family. As to quaternary structure, F-type ATPases have 2 components, CF(1) - the catalytic core - and CF(0) - the membrane proton channel. CF(1) has five subunits: alpha(3), beta(3), gamma(1), delta(1), epsilon(1). CF(0) has four main subunits: a(1), b(1), b'(1) and c(9-12).

The protein localises to the plastid. It is found in the chloroplast thylakoid membrane. The enzyme catalyses ATP + H2O + 4 H(+)(in) = ADP + phosphate + 5 H(+)(out). Its function is as follows. Produces ATP from ADP in the presence of a proton gradient across the membrane. The catalytic sites are hosted primarily by the beta subunits. The protein is ATP synthase subunit beta, chloroplastic of Euglena gracilis.